A 234-amino-acid chain; its full sequence is Probable transcriptional regulatory protein PSPPH_2212 (234 aa).

The protein belongs to the TACO1 family.

The protein localises to the cytoplasm. The chain is Probable transcriptional regulatory protein PSPPH_2212 from Pseudomonas savastanoi pv. phaseolicola (strain 1448A / Race 6) (Pseudomonas syringae pv. phaseolicola (strain 1448A / Race 6)).